A 61-amino-acid polypeptide reads, in one-letter code: Small ribosomal subunit protein uS14 (61 aa).

The Zn(2+) site is built by C24, C27, C40, and C43.

It belongs to the universal ribosomal protein uS14 family. Zinc-binding uS14 subfamily. As to quaternary structure, part of the 30S ribosomal subunit. Contacts proteins S3 and S10. Requires Zn(2+) as cofactor.

In terms of biological role, binds 16S rRNA, required for the assembly of 30S particles and may also be responsible for determining the conformation of the 16S rRNA at the A site. This is Small ribosomal subunit protein uS14 from Symbiobacterium thermophilum (strain DSM 24528 / JCM 14929 / IAM 14863 / T).